We begin with the raw amino-acid sequence, 452 residues long: Probable receptor-like protein kinase At5g20050 (452 aa).

The signal sequence occupies residues 1 to 23 (MEDKKANIIATILILALVVVIIA). The Extracellular portion of the chain corresponds to 24 to 33 (ARVSLKLSKT). A helical membrane pass occupies residues 34-54 (FYLIAGVDISLILAVICFLII). The Cytoplasmic segment spans residues 55–452 (RSRYNKERKL…SSIISPISPR (398 aa)). The Protein kinase domain occupies 103–392 (DGFRSLIGKG…MVIEMLEGRV (290 aa)). ATP contacts are provided by residues 109–117 (IGKGGSGSV) and K131. At Y178 the chain carries Phosphotyrosine. The active-site Proton acceptor is D236. T270 and T275 each carry phosphothreonine.

Belongs to the protein kinase superfamily. Ser/Thr protein kinase family.

It is found in the membrane. The enzyme catalyses L-seryl-[protein] + ATP = O-phospho-L-seryl-[protein] + ADP + H(+). It carries out the reaction L-threonyl-[protein] + ATP = O-phospho-L-threonyl-[protein] + ADP + H(+). This chain is Probable receptor-like protein kinase At5g20050, found in Arabidopsis thaliana (Mouse-ear cress).